We begin with the raw amino-acid sequence, 493 residues long: MSDSKDSKGKAPQKPNDAEQTPGGKLTPQAAEALLENNPSLKNELGGLDKDKALEALRKMDISELLTGLSLTGKNKKDMAAFKFWQTQPVPRFDEAASNAAGGPIKMIDPEKVSKEPDALIEGFEWTTLDLTNEEELRELWDLLTYHYVEDDNAMFRFRYSKSFLHWALMSPGWRKEWHVGVRATKSRKLVASISGVPTQIRVRGQKIKVTEINFLCIHKKLRSKRLAPVLIKEITRRCYLNGIYQAIYTAGVVLPTPVSSCRYYHRPLDWLKLYEVGFSPLPRGSTKARQITKNHLPSHTSTPNLRPMEAKDVDAVHDLLERYLNQFDIHQAFTREEIDHWLVYKESPQKEQVIWSYVVEDPETHKITDFFSFYNLESTVIQHPKHDCVRAAYLYYYATETAFLDDQKALKNRLQMLMNDALILAKKAQFDVFNALTSHHNPLFLEQLKFGAGDGQLHFYLYNYRTAPIAGGVNEKNLPDENRMGGVGVVML.

Residues 1 to 30 (MSDSKDSKGKAPQKPNDAEQTPGGKLTPQA) are disordered. Residues 82 to 85 (FKFW), 216 to 218 (LCI), and 224 to 228 (SKRLA) each bind tetradecanoyl-CoA. Catalysis depends on Leu-493, which acts as the Proton acceptor; via carboxylate.

This sequence belongs to the NMT family. As to quaternary structure, monomer.

Its subcellular location is the cytoplasm. The catalysed reaction is N-terminal glycyl-[protein] + tetradecanoyl-CoA = N-tetradecanoylglycyl-[protein] + CoA + H(+). Adds a myristoyl group to the N-terminal glycine residue of certain cellular proteins. This is Glycylpeptide N-tetradecanoyltransferase (swoF) from Emericella nidulans (strain FGSC A4 / ATCC 38163 / CBS 112.46 / NRRL 194 / M139) (Aspergillus nidulans).